The following is a 919-amino-acid chain: Glutamate receptor ionotropic, kainate 3 (919 aa).

Residues 1–31 form the signal peptide; the sequence is MTAPWRRLRSLVWEYWAGFLVCAFWIPDSRG. The Extracellular segment spans residues 32–563; sequence MPHVIRIGGI…VFSFLNPLSP (532 aa). N-linked (GlcNAc...) asparagine glycans are attached at residues N70, N76, N278, N381, N415, N426, and N433. An intrachain disulfide couples C99 to C350. 3 residues coordinate L-glutamate: P518, T520, and R525. N548 and N551 each carry an N-linked (GlcNAc...) asparagine glycan. A helical membrane pass occupies residues 564 to 584; sequence DIWMYVLLAYLGVSCVLFVIA. Topologically, residues 585–636 are cytoplasmic; that stretch reads RFSPYEWYDAHPCNPGSEVVENNFTLLNSFWFGMGSLMQQGSELMPKALSTR. A helical membrane pass occupies residues 637–657; sequence IIGGIWWFFTLIIISSYTANL. Residues 658-820 lie on the Extracellular side of the membrane; that stretch reads AAFLTVERME…KEASALGIQK (163 aa). A691, T692, and E739 together coordinate L-glutamate. A glycan (N-linked (GlcNAc...) asparagine) is linked at N752. Residues 821-841 form a helical membrane-spanning segment; that stretch reads IGGIFIVLAAGLVLSVLVAVG. Residues 842–919 are Cytoplasmic-facing; it reads EFIYKLRKTA…CSTSLAPVFP (78 aa). Phosphoserine is present on S869. K887 participates in a covalent cross-link: Glycyl lysine isopeptide (Lys-Gly) (interchain with G-Cter in SUMO1).

Belongs to the glutamate-gated ion channel (TC 1.A.10.1) family. GRIK3 subfamily. Homotetramer, and heterotetramer with either GRIK4 or GRIK5. Can form functional heteromeric receptors with GRIK2. Interacts with PRKCABP. Interacts with NETO2. In terms of tissue distribution, detected in whole brain, cerebellum, brain cortex and hippocampus.

It localises to the cell membrane. The protein localises to the postsynaptic cell membrane. The enzyme catalyses Ca(2+)(in) = Ca(2+)(out). Glutamate-gated receptor activity inhibited by spermine. In terms of biological role, ionotropic glutamate receptor that functions as a cation-permeable ligand-gated ion channel, gated by L-glutamate and the glutamatergic agonist kainic acid. Binding of the excitatory neurotransmitter L-glutamate induces a conformation change, leading to the opening of the cation channel, and thereby converts the chemical signal to an electrical impulse. The receptor then desensitizes rapidly and enters a transient inactive state, characterized by the presence of bound agonist. In association with GRIK2, involved in presynaptic facilitation of glutamate release at hippocampal mossy fiber synapses. This is Glutamate receptor ionotropic, kainate 3 (Grik3) from Mus musculus (Mouse).